We begin with the raw amino-acid sequence, 155 residues long: Class I hydrophobin C (155 aa).

The N-terminal stretch at 1–22 is a signal peptide; it reads MLVTMRLSRSIAVFTLVTYATG. 4 disulfides stabilise this stretch: C52–C129, C60–C123, C61–C101, and C130–C148.

Belongs to the fungal hydrophobin family. Self-assembles to form functional amyloid fibrils called rodlets. Self-assembly into fibrillar rodlets occurs spontaneously at hydrophobic:hydrophilic interfaces and the rodlets further associate laterally to form amphipathic monolayers.

Its subcellular location is the secreted. It localises to the spore wall. Functionally, aerial growth, conidiation, and dispersal of filamentous fungi in the environment rely upon a capability of their secreting small amphipathic proteins called hydrophobins (HPBs) with low sequence identity. Class I can self-assemble into an outermost layer of rodlet bundles on aerial cell surfaces, conferring cellular hydrophobicity that supports fungal growth, development and dispersal; whereas Class II form highly ordered films at water-air interfaces through intermolecular interactions but contribute nothing to the rodlet structure. RodC is a class I hydrophobin that, unlike rodA, is not required for rodlet formation. In Aspergillus fumigatus (strain ATCC MYA-4609 / CBS 101355 / FGSC A1100 / Af293) (Neosartorya fumigata), this protein is Class I hydrophobin C.